Reading from the N-terminus, the 266-residue chain is Uridylate kinase (266 aa).

Position 26 to 29 (26 to 29 (KLGG)) interacts with ATP. Gly67 lines the UMP pocket. Gly68 and Arg72 together coordinate ATP. UMP-binding positions include Asp87 and 148–155 (LGAPYFST). ATP-binding residues include Tyr181 and Asp184.

Belongs to the UMP kinase family. Homohexamer.

It is found in the cytoplasm. It carries out the reaction UMP + ATP = UDP + ADP. The protein operates within pyrimidine metabolism; CTP biosynthesis via de novo pathway; UDP from UMP (UMPK route): step 1/1. With respect to regulation, inhibited by UTP. Its function is as follows. Catalyzes the reversible phosphorylation of UMP to UDP. The polypeptide is Uridylate kinase (Acidothermus cellulolyticus (strain ATCC 43068 / DSM 8971 / 11B)).